The sequence spans 98 residues: DLTPKVQVYSRFPASAGTKNVLNCFAAGFHPPKISITLMKDGVPMEGAQYSDMSFNDDWSFQRLVYADFTPSSDAVYTCKVDHETLKEPQVYKWDPEF.

The Ig-like C1-type domain maps to 4–92; that stretch reads PKVQVYSRFP…HETLKEPQVY (89 aa). A disulfide bridge connects residues Cys24 and Cys79.

Belongs to the beta-2-microglobulin family. As to quaternary structure, heterodimer of an alpha chain and a beta chain. Beta-2-microglobulin is the beta-chain of major histocompatibility complex class I molecules.

Its subcellular location is the secreted. In terms of biological role, component of the class I major histocompatibility complex (MHC). Involved in the presentation of peptide antigens to the immune system. This Meleagris gallopavo (Wild turkey) protein is Beta-2-microglobulin (B2M).